Here is a 1182-residue protein sequence, read N- to C-terminus: NACHT, LRR and PYD domains-containing protein 1a (1182 aa).

The segment at 1-23 (MEESQSKQESSTKVAQHEGQEDV) is disordered. Residues 133–442 (QLVIIEGAAG…EFFAAMSYIL (310 aa)) enclose the NACHT domain. 139-146 (GAAGIGKS) lines the ATP pocket. LRR repeat units follow at residues 634 to 655 (NLEELDLSGNPLSYYAVHSLCT), 691 to 711 (SLTELDLQLNDLGDGGVKMLC), and 720 to 743 (NLSILWLDQASLSDQVIAELRTLE). The interval 780–806 (QQRQQSGDKHMEPLGTEDEFWGPTGPV) is disordered. The tract at residues 799–932 (FWGPTGPVTT…HYAVLENPSF (134 aa)) is ZU5. The region spanning 799 to 1082 (FWGPTGPVTT…LRPALPKIAT (284 aa)) is the FIIND domain. Residues 933 to 1082 (SPMGILLRMI…LRPALPKIAT (150 aa)) form a UPA region. The CARD domain occupies 1092–1175 (HFMDQHREQL…HLVMDILEKL (84 aa)).

Belongs to the NLRP family. In terms of assembly, interacts (via LRR repeats) with BCL2 and BCL2L1 (via the loop between motifs BH4 and BH3). Interacts with NOD2; this interaction is enhanced in the presence of muramyl dipeptide (MDP) and increases IL1B release. Interacts with EIF2AK2/PKR; this interaction requires EIF2AK2 activity, is accompanied by EIF2AK2 autophosphorylation and promotes inflammasome assembly in response to danger-associated signals. Interacts with MEFV; this interaction targets Nlrp1a to degradation by autophagy, hence preventing excessive IL1B- and IL18-mediated inflammation. Interacts with DPP9; leading to inhibit activation of the inflammasome. DPP9 acts via formation of a ternary complex, composed of a DPP9 homodimer, one full-length Nlrp1a protein, and one cleaved C-terminus of Nlrp1a (NACHT, LRR and PYD domains-containing protein 1a, C-terminus). Interacts with DPP8; leading to inhibit activation of the inflammasome, probably via formation of a ternary complex with DPP8. As to quaternary structure, interacts with the C-terminal part of Nlrp1a (NACHT, LRR and PYD domains-containing protein 1a, C-terminus) in absence of pathogens and other damage-associated signals. Interacts with the N-terminal part of Nlrp1a (NACHT, LRR and PYD domains-containing protein 1a, N-terminus) in absence of pathogens and other damage-associated signals. Homomultimer; forms the Nlrp1a inflammasome polymeric complex, a filament composed of homopolymers of this form in response to pathogens and other damage-associated signals. Interacts (via CARD domain) with CASP1 (via CARD domain); leading to CASP1 activation. In terms of processing, autocatalytically cleaved. Autocatalytic cleavage in FIIND region occurs constitutively, prior to activation signals, and is required for inflammasome activity (IL1B release), possibly by facilitating CASP1 binding. Both N- and C-terminal parts remain associated non-covalently. Post-translationally, ubiquitinated in response to pathogen-associated signals, leading to its degradation by the proteasome and subsequent release of the cleaved C-terminal part of the protein (NACHT, LRR and PYD domains-containing protein 1a, C-terminus), which polymerizes and forms the Nlrp1a inflammasome. Highly expressed in hematopoietic stem cells and progenitor cells of both myeloid and lymphoid origin. The expression is highly strain-dependent. Not expressed in Balb/cJ animals, but widely expressed in C57BL/6J. Expressed in macrophages resistant to Bacillus anthracis lethal toxin, but not in toxin-sensitive macrophages, except in CAST/EiJ strain.

It is found in the cytoplasm. The protein localises to the cytosol. Its subcellular location is the nucleus. The protein resides in the inflammasome. Nlrp1a inflammasome is activated by pathogens and other damage-associated signals: activation promotes ubiquitination and degradation of the N-terminal part, releasing the cleaved C-terminal part of the protein (NACHT, LRR and PYD domains-containing protein 1a, C-terminus), which polymerizes and forms the Nlrp1a inflammasome. Nlrp1a inflammasome is inhibited by DPP8 and DPP9, which sequester the C-terminal fragment of Nlrp1a (NACHT, LRR and PYD domains-containing protein 1a, C-terminus) in a ternary complex, thereby preventing Nlrp1a oligomerization and activation. Nlrp1a inflammasome is activated by Val-boroPro (Talabostat, PT-100), an inhibitor of dipeptidyl peptidases DPP8 and DPP9. Val-boroPro relieves inhibition of DPP8 and/or DPP9 by promoting disruption of the ternary complex, releasing its C-terminal part from autoinhibition. Functionally, acts as the sensor component of the Nlrp1a inflammasome, which mediates inflammasome activation in response to various pathogen-associated signals, leading to subsequent pyroptosis. Inflammasomes are supramolecular complexes that assemble in the cytosol in response to pathogens and other damage-associated signals and play critical roles in innate immunity and inflammation. Acts as a recognition receptor (PRR): recognizes specific pathogens and other damage-associated signals, and mediates the formation of the inflammasome polymeric complex. In response to pathogen-associated signals, the N-terminal part of Nlrp1a is degraded by the proteasome, releasing the cleaved C-terminal part of the protein (NACHT, LRR and PYD domains-containing protein 1a, C-terminus), which polymerizes to initiate the formation of the inflammasome complex: the inflammasome recruits pro-caspase-1 (proCASP1) and promotes caspase-1 (CASP1) activation, which subsequently cleaves and activates inflammatory cytokines IL1B and IL18 and gasdermin-D (GSDMD), leading to pyroptosis. In the absence of GSDMD expression, the Nlrp1a inflammasome is able to recruit and activate CASP8, leading to activation of gasdermin-E (GSDME). Activation of Nlrp1a inflammasome is also required for HMGB1 secretion; the active cytokines and HMGB1 stimulate inflammatory responses. When activated in the bone marrow, induces the pyroptosis of hematopoietic stem cells and progenitor cells of both myeloid and lymphoid lineages, hence allowing the removal of damaged cells, and the release of IL1B, which induces granulopoiesis. Constitutes the precursor of the Nlrp1a inflammasome, which mediates autoproteolytic processing within the FIIND domain to generate the N-terminal and C-terminal parts, which are associated non-covalently in absence of pathogens and other damage-associated signals. In terms of biological role, regulatory part that prevents formation of the Nlrp1a inflammasome: in absence of pathogens and other damage-associated signals, interacts with the C-terminal part of Nlrp1a (NACHT, LRR and PYD domains-containing protein 1a, C-terminus), preventing activation of the Nlrp1a inflammasome. In response to pathogen-associated signals, this part is ubiquitinated and degraded by the proteasome, releasing the cleaved C-terminal part of the protein, which polymerizes and forms the Nlrp1a inflammasome. Its function is as follows. Constitutes the active part of the Nlrp1a inflammasome. In absence of pathogens and other damage-associated signals, interacts with the N-terminal part of Nlrp1a (NACHT, LRR and PYD domains-containing protein 1a, N-terminus), preventing activation of the Nlrp1a inflammasome. In response to pathogen-associated signals, the N-terminal part of Nlrp1a is degraded by the proteasome, releasing this form, which polymerizes to form the Nlrp1a inflammasome complex: the Nlrp1a inflammasome complex then directly recruits pro-caspase-1 (proCASP1) and promotes caspase-1 (CASP1) activation, leading to gasdermin-D (GSDMD) cleavage and subsequent pyroptosis. The sequence is that of NACHT, LRR and PYD domains-containing protein 1a from Mus musculus (Mouse).